The primary structure comprises 388 residues: Na(+)/H(+) antiporter NhaA (388 aa).

The Cytoplasmic segment spans residues 1 to 11; it reads MKHLHRFFSSD. The helical transmembrane segment at 12–31 threads the bilayer; sequence ASGGIILIIAAILAMIMANS. Residues 32-58 are Periplasmic-facing; the sequence is GATSGWYHDFLETPVQLRVGSLEINKN. A helical transmembrane segment spans residues 59–80; that stretch reads MLLWINDALMAVFFLLVGLEVK. The Cytoplasmic segment spans residues 81–96; the sequence is RELMQGSLASLRQAAF. A helical transmembrane segment spans residues 97–116; it reads PVIAAIGGMIVPALLYLAFN. The Periplasmic segment spans residues 117–122; that stretch reads YADPIT. Residues 123 to 130 traverse the membrane as a helical segment; sequence REGWAIPA. At 131 to 154 the chain is on the cytoplasmic side; it reads ATDIAFALGVLALLGSRVPLVLKI. The chain crosses the membrane as a helical span at residues 155 to 176; it reads FLMALAIIDDLGAIIIIALFYT. The Periplasmic portion of the chain corresponds to 177–180; sequence NDLS. A helical membrane pass occupies residues 181–200; that stretch reads MASLGVAAVAIAVLAVLNLC. Topologically, residues 201 to 204 are cytoplasmic; that stretch reads GVRR. A helical transmembrane segment spans residues 205–222; it reads TGVYILVGVVLWTAVLKS. A topological domain (periplasmic) is located at residue Gly-223. A helical membrane pass occupies residues 224-236; the sequence is VHATLAGVIVGFF. Over 237–253 the chain is Cytoplasmic; sequence IPLKEKHGRSPAKRLEH. Residues 254–272 traverse the membrane as a helical segment; that stretch reads VLHPWVAYLILPLFAFANA. Over 273–286 the chain is Periplasmic; sequence GVSLQGVTLDGLTS. The chain crosses the membrane as a helical span at residues 287 to 310; it reads ILPLGIIAGLLIGKPLGISLFCWL. The Cytoplasmic portion of the chain corresponds to 311 to 339; the sequence is ALRLKLAHLPEGTTYQQIMVVGILCGIGF. A helical membrane pass occupies residues 340–350; that stretch reads TMSIFIASLAF. Topologically, residues 351–357 are periplasmic; that stretch reads GSVDPEL. The helical transmembrane segment at 358-380 threads the bilayer; the sequence is INWAKLGILVGSISSAVIGYSWL. At 381–388 the chain is on the cytoplasmic side; sequence RVRLRPSV.

Belongs to the NhaA Na(+)/H(+) (TC 2.A.33) antiporter family.

It localises to the cell inner membrane. It carries out the reaction Na(+)(in) + 2 H(+)(out) = Na(+)(out) + 2 H(+)(in). Its function is as follows. Na(+)/H(+) antiporter that extrudes sodium in exchange for external protons. This chain is Na(+)/H(+) antiporter NhaA, found in Shigella flexneri.